We begin with the raw amino-acid sequence, 590 residues long: Sperm-associated microtubule inner protein 4 (590 aa).

At threonine 219 the chain carries Phosphothreonine. Serine 407 and serine 422 each carry phosphoserine. Residue lysine 427 forms a Glycyl lysine isopeptide (Lys-Gly) (interchain with G-Cter in SUMO2) linkage. Tyrosine 442 carries the phosphotyrosine modification. Serine 485 carries the phosphoserine modification. Lysine 545 participates in a covalent cross-link: Glycyl lysine isopeptide (Lys-Gly) (interchain with G-Cter in SUMO2). Phosphoserine is present on serine 547.

In terms of tissue distribution, predominantly expressed in the testes.

Its subcellular location is the cytoplasm. It localises to the cytoskeleton. The protein resides in the microtubule organizing center. The protein localises to the centrosome. It is found in the flagellum axoneme. Its function is as follows. Microtubule inner protein (MIP) part of the dynein-decorated doublet microtubules (DMTs) in flagellum axoneme. May serve to reinforce and thus stabilize the microtubule structure in the sperm flagella. The protein is Sperm-associated microtubule inner protein 4 of Homo sapiens (Human).